The primary structure comprises 466 residues: Integrator complex subunit 12 (466 aa).

Residues 41–101 (KGNDSVYRPQ…EAEKRSADKM (61 aa)) form a disordered region. Residues 69-84 (KASSSTPSSSMLSKPL) are compositionally biased toward low complexity. A compositionally biased stretch (basic and acidic residues) spans 85 to 101 (TSEKLKKEAEKRSADKM). A PHD-type zinc finger spans residues 156–212 (GLACVVCRQMTVFSGNQLVECQECHNLYHQDCHKPQVTDKDVNDPRLVWYCARCTRQ). 2 disordered regions span residues 216-251 (MAQK…ELKA) and 311-466 (GTSS…KLKK). 2 stretches are compositionally biased toward polar residues: residues 218–233 (QKNQ…SAVS) and 311–329 (GTSS…SVQK). The segment covering 338–373 (PSKPGSVSKSGSGGSSSSSTIPIKPLPPLILGKTGL) has biased composition (low complexity). Over residues 374 to 386 (SRSMSSDNVSKTG) the composition is skewed to polar residues. Positions 392–423 (PSSAGSVSSLSSQLGSNNGSSSAAGSNVTSSN) are enriched in low complexity. The span at 453 to 466 (QMVKKKAAQKKLKK) shows a compositional bias: basic residues.

It belongs to the Integrator subunit 12 family. In terms of assembly, component of the Integrator complex, composed of core subunits INTS1, INTS2, INTS3, INTS4, INTS5, INTS6, INTS7, INTS8, INTS9/RC74, INTS10, INTS11/CPSF3L, INTS12, INTS13, INTS14 and INTS15. The core complex associates with protein phosphatase 2A subunits PPP2CA and PPP2R1A, to form the Integrator-PP2A (INTAC) complex.

It localises to the nucleus. Functionally, component of the integrator complex, a multiprotein complex that terminates RNA polymerase II (Pol II) transcription in the promoter-proximal region of genes. The integrator complex provides a quality checkpoint during transcription elongation by driving premature transcription termination of transcripts that are unfavorably configured for transcriptional elongation: the complex terminates transcription by (1) catalyzing dephosphorylation of the C-terminal domain (CTD) of Pol II subunit POLR2A/RPB1 and SUPT5H/SPT5, (2) degrading the exiting nascent RNA transcript via endonuclease activity and (3) promoting the release of Pol II from bound DNA. The integrator complex is also involved in terminating the synthesis of non-coding Pol II transcripts, such as enhancer RNAs (eRNAs), small nuclear RNAs (snRNAs), telomerase RNAs and long non-coding RNAs (lncRNAs). The chain is Integrator complex subunit 12 (ints12) from Xenopus tropicalis (Western clawed frog).